Consider the following 643-residue polypeptide: 1-deoxy-D-xylulose-5-phosphate synthase (643 aa).

Thiamine diphosphate-binding positions include His-78 and 119–121 (AHS). Asp-150 contributes to the Mg(2+) binding site. Thiamine diphosphate is bound by residues 151 to 152 (GS), Asn-179, Tyr-288, and Glu-370. Residue Asn-179 coordinates Mg(2+).

Belongs to the transketolase family. DXPS subfamily. In terms of assembly, homodimer. It depends on Mg(2+) as a cofactor. Thiamine diphosphate serves as cofactor.

It catalyses the reaction D-glyceraldehyde 3-phosphate + pyruvate + H(+) = 1-deoxy-D-xylulose 5-phosphate + CO2. The protein operates within metabolic intermediate biosynthesis; 1-deoxy-D-xylulose 5-phosphate biosynthesis; 1-deoxy-D-xylulose 5-phosphate from D-glyceraldehyde 3-phosphate and pyruvate: step 1/1. Its function is as follows. Catalyzes the acyloin condensation reaction between C atoms 2 and 3 of pyruvate and glyceraldehyde 3-phosphate to yield 1-deoxy-D-xylulose-5-phosphate (DXP). The protein is 1-deoxy-D-xylulose-5-phosphate synthase of Brucella melitensis biotype 2 (strain ATCC 23457).